Reading from the N-terminus, the 765-residue chain is 5-methyltetrahydropteroyltriglutamate--homocysteine methyltransferase (765 aa).

Residues 18–21 and K114 contribute to the 5-methyltetrahydropteroyltri-L-glutamate site; that span reads REWK. Residues 437–439 and E490 each bind L-homocysteine; that span reads IGS. L-methionine-binding positions include 437 to 439 and E490; that span reads IGS. W567 lines the 5-methyltetrahydropteroyltri-L-glutamate pocket. Position 605 (D605) interacts with L-homocysteine. D605 is an L-methionine binding site. E611 contacts 5-methyltetrahydropteroyltri-L-glutamate. Positions 647, 649, and 671 each coordinate Zn(2+). H700 acts as the Proton donor in catalysis. Residue C732 participates in Zn(2+) binding.

It belongs to the vitamin-B12 independent methionine synthase family. Zn(2+) serves as cofactor.

The catalysed reaction is 5-methyltetrahydropteroyltri-L-glutamate + L-homocysteine = tetrahydropteroyltri-L-glutamate + L-methionine. Its pathway is amino-acid biosynthesis; L-methionine biosynthesis via de novo pathway; L-methionine from L-homocysteine (MetE route): step 1/1. Catalyzes the transfer of a methyl group from 5-methyltetrahydrofolate to homocysteine resulting in methionine formation. The protein is 5-methyltetrahydropteroyltriglutamate--homocysteine methyltransferase of Listeria monocytogenes serotype 4b (strain F2365).